A 159-amino-acid polypeptide reads, in one-letter code: 2-C-methyl-D-erythritol 2,4-cyclodiphosphate synthase (159 aa).

Positions 8 and 10 each coordinate a divalent metal cation. Residues Asp8–His10 and His34–Ser35 each bind 4-CDP-2-C-methyl-D-erythritol 2-phosphate. His42 serves as a coordination point for a divalent metal cation. Residues Asp56 to Gly58, Phe61 to Asp65, Ala100 to Leu106, Thr132 to Glu135, Phe139, and Arg142 each bind 4-CDP-2-C-methyl-D-erythritol 2-phosphate.

Belongs to the IspF family. In terms of assembly, homotrimer. A divalent metal cation is required as a cofactor.

It carries out the reaction 4-CDP-2-C-methyl-D-erythritol 2-phosphate = 2-C-methyl-D-erythritol 2,4-cyclic diphosphate + CMP. Its pathway is isoprenoid biosynthesis; isopentenyl diphosphate biosynthesis via DXP pathway; isopentenyl diphosphate from 1-deoxy-D-xylulose 5-phosphate: step 4/6. Its function is as follows. Involved in the biosynthesis of isopentenyl diphosphate (IPP) and dimethylallyl diphosphate (DMAPP), two major building blocks of isoprenoid compounds. Catalyzes the conversion of 4-diphosphocytidyl-2-C-methyl-D-erythritol 2-phosphate (CDP-ME2P) to 2-C-methyl-D-erythritol 2,4-cyclodiphosphate (ME-CPP) with a corresponding release of cytidine 5-monophosphate (CMP). This is 2-C-methyl-D-erythritol 2,4-cyclodiphosphate synthase from Salmonella typhimurium (strain LT2 / SGSC1412 / ATCC 700720).